The following is a 218-amino-acid chain: Probable transaldolase (218 aa).

Lys83 (schiff-base intermediate with substrate) is an active-site residue.

It belongs to the transaldolase family. Type 3B subfamily.

The protein resides in the cytoplasm. It catalyses the reaction D-sedoheptulose 7-phosphate + D-glyceraldehyde 3-phosphate = D-erythrose 4-phosphate + beta-D-fructose 6-phosphate. Its pathway is carbohydrate degradation; pentose phosphate pathway; D-glyceraldehyde 3-phosphate and beta-D-fructose 6-phosphate from D-ribose 5-phosphate and D-xylulose 5-phosphate (non-oxidative stage): step 2/3. In terms of biological role, transaldolase is important for the balance of metabolites in the pentose-phosphate pathway. The protein is Probable transaldolase of Thermotoga sp. (strain RQ2).